We begin with the raw amino-acid sequence, 380 residues long: Glutamate 5-kinase (380 aa).

K15 provides a ligand contact to ATP. Substrate is bound by residues S59, D146, and N158. An ATP-binding site is contributed by 178 to 179 (TD). The region spanning 285–363 (RGSVTVDAGA…AEFERLLGYA (79 aa)) is the PUA domain.

The protein belongs to the glutamate 5-kinase family.

The protein resides in the cytoplasm. The catalysed reaction is L-glutamate + ATP = L-glutamyl 5-phosphate + ADP. The protein operates within amino-acid biosynthesis; L-proline biosynthesis; L-glutamate 5-semialdehyde from L-glutamate: step 1/2. Functionally, catalyzes the transfer of a phosphate group to glutamate to form L-glutamate 5-phosphate. This Acidovorax ebreus (strain TPSY) (Diaphorobacter sp. (strain TPSY)) protein is Glutamate 5-kinase.